Reading from the N-terminus, the 163-residue chain is MTTFLGNPVTFTGKQLQVGDTAHDFSLTATDLSKKTLADFAGKKKVLSIIPSIDTGVCSTQTRRFNQELSDLDNTVVITVSVDLPFAQGKWCAAEGIENAVMLSDYFDHSFGRDYAVLINEWHLLARAVLVLDENNTVTYAEYVDNINTEPDYDAAIAAVKSL.

One can recognise a Thioredoxin domain in the interval 16–162 (LQVGDTAHDF…YDAAIAAVKS (147 aa)). Cysteine 58 (cysteine sulfenic acid (-SOH) intermediate) is an active-site residue. The cysteines at positions 58 and 92 are disulfide-linked.

Belongs to the peroxiredoxin family. Tpx subfamily. Homodimer.

It catalyses the reaction a hydroperoxide + [thioredoxin]-dithiol = an alcohol + [thioredoxin]-disulfide + H2O. Thiol-specific peroxidase that catalyzes the reduction of hydrogen peroxide and organic hydroperoxides to water and alcohols, respectively. Plays a role in cell protection against oxidative stress by detoxifying peroxides. The sequence is that of Thiol peroxidase from Streptococcus sanguinis.